Reading from the N-terminus, the 429-residue chain is 3-phosphoshikimate 1-carboxyvinyltransferase (429 aa).

3-phosphoshikimate contacts are provided by lysine 23, serine 24, and arginine 28. Residue lysine 23 coordinates phosphoenolpyruvate. Glycine 95 and arginine 123 together coordinate phosphoenolpyruvate. 4 residues coordinate 3-phosphoshikimate: serine 168, glutamine 170, aspartate 316, and lysine 343. Phosphoenolpyruvate is bound at residue glutamine 170. Residue aspartate 316 is the Proton acceptor of the active site. The phosphoenolpyruvate site is built by arginine 347 and arginine 389.

Belongs to the EPSP synthase family. As to quaternary structure, monomer.

The protein localises to the cytoplasm. It carries out the reaction 3-phosphoshikimate + phosphoenolpyruvate = 5-O-(1-carboxyvinyl)-3-phosphoshikimate + phosphate. Its pathway is metabolic intermediate biosynthesis; chorismate biosynthesis; chorismate from D-erythrose 4-phosphate and phosphoenolpyruvate: step 6/7. Its function is as follows. Catalyzes the transfer of the enolpyruvyl moiety of phosphoenolpyruvate (PEP) to the 5-hydroxyl of shikimate-3-phosphate (S3P) to produce enolpyruvyl shikimate-3-phosphate and inorganic phosphate. In Bacillus cereus (strain 03BB102), this protein is 3-phosphoshikimate 1-carboxyvinyltransferase.